Reading from the N-terminus, the 551-residue chain is Hydroxylamine reductase (551 aa).

4 residues coordinate [2Fe-2S] cluster: Cys-3, Cys-6, Cys-18, and Cys-25. Residues His-249, Glu-273, Cys-317, Cys-405, Cys-433, Cys-459, Glu-493, and Lys-495 each contribute to the hybrid [4Fe-2O-2S] cluster site. A Cysteine persulfide modification is found at Cys-405.

Belongs to the HCP family. It depends on [2Fe-2S] cluster as a cofactor. Requires hybrid [4Fe-2O-2S] cluster as cofactor.

It localises to the cytoplasm. It catalyses the reaction A + NH4(+) + H2O = hydroxylamine + AH2 + H(+). In terms of biological role, catalyzes the reduction of hydroxylamine to form NH(3) and H(2)O. The chain is Hydroxylamine reductase from Actinobacillus pleuropneumoniae serotype 7 (strain AP76).